The sequence spans 263 residues: Achaete-scute homolog 2 (263 aa).

Disordered stretches follow at residues 104–126 (RRRR…RNER) and 194–248 (PPSD…ELSP). Low complexity-rich tracts occupy residues 110-121 (ATEASSSSAAVA), 202-220 (PSAS…SPSP), and 230-247 (SPRS…GELS). The region spanning 118–170 (AAVARRNERERNRVKLVNLGFQALRQHVPHGGANKKLSKVETLRSAVEYIRAL) is the bHLH domain.

Efficient DNA binding requires dimerization with another basic helix-loop-helix (bHLH) protein. Forms heterodimers with bHLH transcription factor TCF3. May not heterodimerise with bHLH protein HAND1. In terms of tissue distribution, expressed in follicular T-helper (Tfh) cells.

It localises to the nucleus. Functionally, transcription factor. Binds to E-box motifs 5'-CANNTG-3' in the regulatory elements of target genes, probably as a heterodimer with another basic helix-loop-helix (bHLH) protein such as the transcription factor TCF3. May bind both open and closed chromatin, acting as a pioneer transcription factor to allow other factors to bind and activate lineage-specific genes. Required during post-implantation development for the generation of some differentiated trophoblast cell types. Transcriptional activity of ASCL2 may be antagonised in a subset of trophoblast cells by bHLH transcription factor HAND1, perhaps by competing for dimerization with other bHLH proteins. Involved in differentiation and function of follicular T-helper (Tfh) cells, thereby playing a role in germinal center responses; probably modulates expression of genes involved in Tfh cell function, such as BCL6. May also act as a suppressor of Th1-, Th2- and Th17-cell differentiation. Induces the formation of stem cells in intestinal crypts in vitro, synergistically activating transcription of target genes, such as SOX9, together with TCF4/beta-catenin. May form a bistable transcriptional switch, controlling expression of its own gene together with Wnt/R-spondin signaling, and thereby maintaining stem cell characteristics. Modulates expression of target genes, including perhaps down-regulating EGR1/Krox24 and chemokine CXCL10/Mob-1 and up-regulating CXCR4 and CDKN1C/p57kip2, in Schwann cells. May play a role in reducing proliferation of Schwann cells, perhaps acting via modulation of expression of CDKN1C. May be dispensable for blastocyst formation and later embryonic function. May be involved in the determination of neuronal precursors. This is Achaete-scute homolog 2 (Ascl2) from Mus musculus (Mouse).